The following is a 551-amino-acid chain: Chloride channel CLIC-like protein 1 (551 aa).

Positions 1 to 18 (MLCSLLLCECLLLVAGYA) are cleaved as a signal peptide. The Lumenal portion of the chain corresponds to 19 to 184 (HDDDWIDPTD…EDSFGVDPYN (166 aa)). Residues 185–205 (VLMVLLCLLCIVVLVATELWT) form a helical membrane-spanning segment. At 206–216 (YVRWYTQLRRV) the chain is on the cytoplasmic side. Residues 217–237 (LIISFLFSLGWNWMYLYKLAF) form a helical membrane-spanning segment. Residues 238–329 (AQHQAEVAKM…GEFIKALMKE (92 aa)) lie on the Lumenal side of the membrane. A helical membrane pass occupies residues 330–350 (IPALLHLPVLIIMALAILSFC). Residues 351 to 551 (YGAGKSVHVL…GQDPVSSPCG (201 aa)) are Cytoplasmic-facing. Positions 363-415 (IGGPESEPPQALRPRDRRRQEEIDYRPDGGAGDADFHYRGQMGPTEQGPYAKT) are disordered. Over residues 380-389 (RRQEEIDYRP) the composition is skewed to basic and acidic residues. Residues Ser438 and Ser464 each carry the phosphoserine modification. Residues 447–551 (VPDAEAREHP…GQDPVSSPCG (105 aa)) are disordered. Thr482 carries the post-translational modification Phosphothreonine. Residues 488–508 (TESSQSAKPVSGQDTSGNTEG) show a composition bias toward polar residues. A phosphoserine mark is found at Ser509, Ser524, and Ser532.

It belongs to the chloride channel MCLC family. Homomultimers. Interacts with mitochondrial protein PIGBOS1 (via C-terminus); the interaction occurs at the mitochondria-associated endoplasmic reticulum (ER) membrane, a zone of contact between the ER and mitochondrial membranes, but does not appear to play a role in ER-mitochondria tethering and is not affected by ER stress. Interacts with CALR. As to expression, expressed in the retina of the eye, with extensive expression in the lamina cribrosa, optic nerve, ganglion cell layer, inner nuclear layer, outer nuclear layer and retinal pigment epithelium.

It is found in the endoplasmic reticulum membrane. The catalysed reaction is chloride(in) = chloride(out). The enzyme catalyses bromide(in) = bromide(out). It catalyses the reaction nitrate(in) = nitrate(out). It carries out the reaction fluoride(in) = fluoride(out). With respect to regulation, inhibited by ER lumenal Ca(2+). Functionally, anion-selective channel with Ca(2+)-dependent and voltage-independent gating. Permeable to small monovalent anions with selectivity for bromide &gt; chloride &gt; nitrate &gt; fluoride. Operates in the endoplasmic reticulum (ER) membrane where it mediates chloride efflux to compensate for the loss of positive charges from the ER lumen upon Ca(2+) release. Contributes to the maintenance of ER Ca(2+) pools and activation of unfolded protein response to prevent accumulation of misfolded proteins in the ER lumen. Particularly involved in ER homeostasis mechanisms underlying motor neurons and retinal photoreceptors survival. The sequence is that of Chloride channel CLIC-like protein 1 from Homo sapiens (Human).